A 684-amino-acid chain; its full sequence is Cyclic nucleotide-gated channel alpha-1 (684 aa).

Over 1–161 (MKTNIINTWH…PSGNTYYNWL (161 aa)) the chain is Cytoplasmic. The interval 34–145 (ACSSFSDDDN…TKEKKEEEKK (112 aa)) is disordered. A compositionally biased stretch (acidic residues) spans 39–54 (SDDDNGSLSEESENED). The segment covering 105–145 (SKADDKNENKKDPEKKKKKEKEKEKKKKEEKTKEKKEEEKK) has biased composition (basic and acidic residues). Residues 162–183 (FCITLPVMYNWTMIIARACFDE) form a helical membrane-spanning segment. At 184-193 (LQSDYLEYWL) the chain is on the extracellular side. The helical transmembrane segment at 194-214 (IFDYVSDVVYLADMFVRTRTG) threads the bilayer. The Cytoplasmic portion of the chain corresponds to 215–239 (YLEQGLLVKDRMKLIEKYKANLQFK). Residues 240 to 258 (LDVLSVIPTDLLYIKFGWN) form a helical membrane-spanning segment. Residues 259–263 (YPEIR) lie on the Extracellular side of the membrane. The chain crosses the membrane as a helical span at residues 264 to 282 (LNRLLRISRMFEFFQRTET). Topologically, residues 283–289 (RTNYPNI) are cytoplasmic. The segment at 287–395 (PNIFRISNLV…GNIGSMISNM (109 aa)) is ion conduction pathway. A helical membrane pass occupies residues 290–313 (FRISNLVMYIVIIIHWNACVYYSI). Residues 314–336 (SKAIGFGNDTWVYPDVNDPEFGR) lie on the Extracellular side of the membrane. The N-linked (GlcNAc...) asparagine glycan is linked to asparagine 321. The next 2 helical transmembrane spans lie at 337-371 (LARK…IFVV) and 372-396 (VDFL…SNMN). The selectivity filter stretch occupies residues 354–357 (TIGE). Residues 397 to 473 (AARAEFQSRV…DTLKKVRIFA (77 aa)) form a C-linker region. The Cytoplasmic segment spans residues 397-684 (AARAEFQSRV…ESELTESLQD (288 aa)). Residues 477-597 (AGLLVELVLK…EEKGRQILMK (121 aa)) form a cyclic nucleotide-binding domain region. 4 residues coordinate 3',5'-cyclic GMP: glycine 537, serine 540, arginine 553, and threonine 554. Residues arginine 553 and threonine 554 each contribute to the 3',5'-cyclic AMP site. Positions 615-669 (LEEKVTRMEGSVDLLQTRFARILAEYESMQQKLKQRLTKVEKFLKPLIETEFSAL) form a coiled coil.

This sequence belongs to the cyclic nucleotide-gated cation channel (TC 1.A.1.5) family. CNGA1 subfamily. Forms heterotetrameric channels composed of CNGA1 and CNGB1 subunits with 3:1 stoichiometry. May also form cyclic nucleotide-activated homotetrameric channels, that are efficiently activated by saturating cGMP, but poorly activated by saturating cAMP compared to the heterotetramer with CNGB1. The channel binds Ca(2+)-bound CALM1 via CaM1 and CaM2 regions of the CNGB1 subunit; this interaction modulates the affinity of the channel for cNMPs in response to intracellular Ca(2+) levels. In terms of tissue distribution, rod cells in the retina and inner medulla of kidney.

It is found in the cell membrane. It carries out the reaction Ca(2+)(in) = Ca(2+)(out). It catalyses the reaction Na(+)(in) = Na(+)(out). The catalysed reaction is K(+)(in) = K(+)(out). The enzyme catalyses NH4(+)(in) = NH4(+)(out). It carries out the reaction Rb(+)(in) = Rb(+)(out). It catalyses the reaction Li(+)(in) = Li(+)(out). The catalysed reaction is Cs(+)(in) = Cs(+)(out). Functionally, pore-forming subunit of the rod cyclic nucleotide-gated channel. Mediates rod photoresponses at dim light converting transient changes in intracellular cGMP levels into electrical signals. In the dark, cGMP levels are high and keep the channel open enabling a steady inward current carried by Na(+) and Ca(2+) ions that leads to membrane depolarization and neurotransmitter release from synaptic terminals. Upon photon absorption cGMP levels decline leading to channel closure and membrane hyperpolarization that ultimately slows neurotransmitter release and signals the presence of light, the end point of the phototransduction cascade. Conducts cGMP- and cAMP-gated ion currents, with permeability for monovalent and divalent cations. The selectivity for Ca(2+) over Na(+) increases with cGMP concentrations, whereas the selectivity among monovalent ions is independent of the cGMP levels. The sequence is that of Cyclic nucleotide-gated channel alpha-1 (Cnga1) from Mus musculus (Mouse).